The following is a 778-amino-acid chain: Probable potassium transporter 13 (778 aa).

Topologically, residues 1 to 28 (MDVEGGGGGGGGAPPRGRNSWGWQKGTL) are cytoplasmic. A helical transmembrane segment spans residues 29 to 49 (LLAYQSFGVVYGDLCISPVYV). The Extracellular segment spans residues 50 to 72 (YKNTFSGKLRLHEEDEEILGVLS). A helical transmembrane segment spans residues 73–93 (LVFWSLTLIPLLKYIILVLGA). Residues 94 to 156 (DDNGEGGTFA…AFFEKHYSLR (63 aa)) are Cytoplasmic-facing. A helical membrane pass occupies residues 157 to 177 (VVLLLFVLMGTSMVIGDGVLT). At 178–199 (PTMSVLAAVSGLRIKFPELHEN) the chain is on the extracellular side. A glycan (N-linked (GlcNAc...) asparagine) is linked at Asn-199. Residues 200-220 (YTVLLACVILIGLFALQHYGT) form a helical membrane-spanning segment. The Cytoplasmic portion of the chain corresponds to 221–222 (RR). The chain crosses the membrane as a helical span at residues 223–243 (VGFLFAPILISWLTCIGGIGI). Over 244–276 (YNIIKWNPSVIRALSPYYIYNFFRKAGKDGWSS) the chain is Extracellular. The chain crosses the membrane as a helical span at residues 277–297 (LGGIVLCLTGAEAMFADLGHF). Residues 298–303 (SKLSLR) lie on the Cytoplasmic side of the membrane. A helical membrane pass occupies residues 304 to 324 (LGFTIVVYPCLVLAYMGEAAY). The Extracellular segment spans residues 325–343 (LSKHREDLQSSFYKALPDR). A helical membrane pass occupies residues 344-364 (VFWPVLFIATLATAVGSQAII). The Cytoplasmic segment spans residues 365 to 395 (SATFSIISQCRALGCFPRIKVVHTSSHVHGQ). A helical membrane pass occupies residues 396-416 (IYIPEVNWVLMSLCLAVTIGF). Residues 417–424 (RDTEMIGN) lie on the Extracellular side of the membrane. A helical membrane pass occupies residues 425 to 445 (AYGLAVILVMCATTCLMFLVI). At 446–451 (TTVWNR) the chain is on the cytoplasmic side. A helical membrane pass occupies residues 452 to 472 (WVVWAAAFTVVFGSVELLYLS). The Extracellular segment spans residues 473–477 (ACLAK). Residues 478 to 498 (VPHGGWLPLLLSLTTLLVMST) form a helical membrane-spanning segment. Residues 499–778 (WHYGTAMKQQ…LIEVGMAYRV (280 aa)) are Cytoplasmic-facing. Positions 655 to 677 (PATSSSGGSNQHAFDAGTTTSSC) are enriched in polar residues. The disordered stretch occupies residues 655 to 704 (PATSSSGGSNQHAFDAGTTTSSCEIDATAGGGGRRKVRFDNDGGGGGEEE).

Belongs to the HAK/KUP transporter (TC 2.A.72.3) family.

It is found in the membrane. Functionally, high-affinity potassium transporter. The sequence is that of Probable potassium transporter 13 (HAK13) from Oryza sativa subsp. japonica (Rice).